The chain runs to 306 residues: uncharacterized protein (306 aa).

Residues 13–39 adopt a coiled-coil conformation; the sequence is NMLNEIAANNNLLNNKNNQTNQLNNNQ. Disordered regions lie at residues 44–76, 103–204, and 216–249; these read YNNQ…HQQN, DSKE…QSGQ, and QKQL…TMQH. Positions 119 to 201 are enriched in low complexity; that stretch reads HQQPIQNNPS…QFAQPNQYNQ (83 aa). The segment covering 218 to 235 has biased composition (basic and acidic residues); the sequence is QLDKNQPEKIPSKPEKNQ. The helical transmembrane segment at 279–299 threads the bilayer; it reads LFDYIIIPIALVLVFLFLVHP.

Its subcellular location is the membrane. This is an uncharacterized protein from Acanthamoeba polyphaga mimivirus (APMV).